A 94-amino-acid polypeptide reads, in one-letter code: Pyrimidine/purine nucleoside phosphorylase (94 aa).

Belongs to the nucleoside phosphorylase PpnP family.

The catalysed reaction is a purine D-ribonucleoside + phosphate = a purine nucleobase + alpha-D-ribose 1-phosphate. It catalyses the reaction adenosine + phosphate = alpha-D-ribose 1-phosphate + adenine. It carries out the reaction cytidine + phosphate = cytosine + alpha-D-ribose 1-phosphate. The enzyme catalyses guanosine + phosphate = alpha-D-ribose 1-phosphate + guanine. The catalysed reaction is inosine + phosphate = alpha-D-ribose 1-phosphate + hypoxanthine. It catalyses the reaction thymidine + phosphate = 2-deoxy-alpha-D-ribose 1-phosphate + thymine. It carries out the reaction uridine + phosphate = alpha-D-ribose 1-phosphate + uracil. The enzyme catalyses xanthosine + phosphate = alpha-D-ribose 1-phosphate + xanthine. In terms of biological role, catalyzes the phosphorolysis of diverse nucleosides, yielding D-ribose 1-phosphate and the respective free bases. Can use uridine, adenosine, guanosine, cytidine, thymidine, inosine and xanthosine as substrates. Also catalyzes the reverse reactions. This is Pyrimidine/purine nucleoside phosphorylase from Shigella dysenteriae serotype 1 (strain Sd197).